A 150-amino-acid chain; its full sequence is Endoribonuclease YbeY (150 aa).

Zn(2+) contacts are provided by His-113, His-117, and His-123.

This sequence belongs to the endoribonuclease YbeY family. Requires Zn(2+) as cofactor.

It localises to the cytoplasm. In terms of biological role, single strand-specific metallo-endoribonuclease involved in late-stage 70S ribosome quality control and in maturation of the 3' terminus of the 16S rRNA. The polypeptide is Endoribonuclease YbeY (Syntrophotalea carbinolica (strain DSM 2380 / NBRC 103641 / GraBd1) (Pelobacter carbinolicus)).